The primary structure comprises 379 residues: Phospho-N-acetylmuramoyl-pentapeptide-transferase (379 aa).

Transmembrane regions (helical) follow at residues 27–47 (FRTAFASLTALFMGLIIGPAV), 76–96 (TMGGVLITIAIIVPTLLWADL), 100–120 (FVWIAMLATIAFGAIGFTDDY), 135–155 (AKMGLQILVAILVAISLVLVQ), 185–205 (PHIWIIAYIPFLAFVAIVLVG), 218–238 (GLAIGCTVIAAGALTVLTYVS), 255–275 (VGELSIFCGAMVGSAIGFLWY), 283–303 (FMGDVGSLALGGAIGTVAVII), 307–327 (LLLPFIGGVFVLEALSVILQV), and 356–376 (KIIVRFWIASLVFALFALTTL).

This sequence belongs to the glycosyltransferase 4 family. MraY subfamily. Requires Mg(2+) as cofactor.

The protein localises to the cell inner membrane. The catalysed reaction is UDP-N-acetyl-alpha-D-muramoyl-L-alanyl-gamma-D-glutamyl-meso-2,6-diaminopimeloyl-D-alanyl-D-alanine + di-trans,octa-cis-undecaprenyl phosphate = di-trans,octa-cis-undecaprenyl diphospho-N-acetyl-alpha-D-muramoyl-L-alanyl-D-glutamyl-meso-2,6-diaminopimeloyl-D-alanyl-D-alanine + UMP. It functions in the pathway cell wall biogenesis; peptidoglycan biosynthesis. Functionally, catalyzes the initial step of the lipid cycle reactions in the biosynthesis of the cell wall peptidoglycan: transfers peptidoglycan precursor phospho-MurNAc-pentapeptide from UDP-MurNAc-pentapeptide onto the lipid carrier undecaprenyl phosphate, yielding undecaprenyl-pyrophosphoryl-MurNAc-pentapeptide, known as lipid I. In Koribacter versatilis (strain Ellin345), this protein is Phospho-N-acetylmuramoyl-pentapeptide-transferase.